We begin with the raw amino-acid sequence, 399 residues long: Phosphopentomutase (399 aa).

Mn(2+) contacts are provided by Asp10, Asp296, His301, Asp337, His338, and His349.

The protein belongs to the phosphopentomutase family. Mn(2+) serves as cofactor.

The protein localises to the cytoplasm. The enzyme catalyses 2-deoxy-alpha-D-ribose 1-phosphate = 2-deoxy-D-ribose 5-phosphate. It carries out the reaction alpha-D-ribose 1-phosphate = D-ribose 5-phosphate. It participates in carbohydrate degradation; 2-deoxy-D-ribose 1-phosphate degradation; D-glyceraldehyde 3-phosphate and acetaldehyde from 2-deoxy-alpha-D-ribose 1-phosphate: step 1/2. In terms of biological role, isomerase that catalyzes the conversion of deoxy-ribose 1-phosphate (dRib-1-P) and ribose 1-phosphate (Rib-1-P) to deoxy-ribose 5-phosphate (dRib-5-P) and ribose 5-phosphate (Rib-5-P), respectively. This chain is Phosphopentomutase, found in Idiomarina loihiensis (strain ATCC BAA-735 / DSM 15497 / L2-TR).